We begin with the raw amino-acid sequence, 359 residues long: Histidinol-phosphate aminotransferase (359 aa).

Lysine 217 carries the post-translational modification N6-(pyridoxal phosphate)lysine.

This sequence belongs to the class-II pyridoxal-phosphate-dependent aminotransferase family. Histidinol-phosphate aminotransferase subfamily. Homodimer. Pyridoxal 5'-phosphate serves as cofactor.

It carries out the reaction L-histidinol phosphate + 2-oxoglutarate = 3-(imidazol-4-yl)-2-oxopropyl phosphate + L-glutamate. The protein operates within amino-acid biosynthesis; L-histidine biosynthesis; L-histidine from 5-phospho-alpha-D-ribose 1-diphosphate: step 7/9. The chain is Histidinol-phosphate aminotransferase from Salmonella newport (strain SL254).